The primary structure comprises 327 residues: Nucleotide-binding protein CYB_0992 (327 aa).

12 to 19 (GLTGAGKT) provides a ligand contact to ATP.

This sequence belongs to the RapZ-like family.

Displays ATPase and GTPase activities. In Synechococcus sp. (strain JA-2-3B'a(2-13)) (Cyanobacteria bacterium Yellowstone B-Prime), this protein is Nucleotide-binding protein CYB_0992.